Reading from the N-terminus, the 392-residue chain is MLYLLYEVIQNSEAGRVLNFLRYPTFRIIAAGVFALLLGMLIGPKLIARLRLKQHGQSNVREDTPDSHQKKKGTPTMGGALILLCIAAGTLLFADLKSRAVWVMLLLTLGYGFIGFLDDWLKLSKRNSKGLAGRKKMVLQTFFFLVAVFGLLTTWTLPDGSFGPTLLINTKLTLPFIPTRWFNPDLGWFYVFFAWIVVVGTSNAVNLTDGLDGLAIVPTIVSAITFAVLCYVAGTTLSIADYEVVGGASKLVATPLYQYLGILQVPGGAELAVFCAAIVGAGISFLWFNTYPASVFMGDIGSLALGGALGGLAMLSKNEVVSAIIHGIFFAEILSVMIQVTSFKMTGKRVFKMAPVHHHFELKGMAEPKIIVRFWIVSILCGGVALLSLKLR.

Transmembrane regions (helical) follow at residues 28–48 (IIAA…KLIA), 76–96 (TMGG…FADL), 101–121 (VWVM…DDWL), 137–157 (MVLQ…TWTL), 181–201 (WFNP…VVGT), 213–233 (GLAI…CYVA), 268–288 (GAEL…FLWF), 295–315 (VFMG…LAML), 320–340 (VVSA…MIQV), and 369–389 (KIIV…LLSL).

It belongs to the glycosyltransferase 4 family. MraY subfamily. The cofactor is Mg(2+).

The protein localises to the cell inner membrane. The enzyme catalyses UDP-N-acetyl-alpha-D-muramoyl-L-alanyl-gamma-D-glutamyl-meso-2,6-diaminopimeloyl-D-alanyl-D-alanine + di-trans,octa-cis-undecaprenyl phosphate = di-trans,octa-cis-undecaprenyl diphospho-N-acetyl-alpha-D-muramoyl-L-alanyl-D-glutamyl-meso-2,6-diaminopimeloyl-D-alanyl-D-alanine + UMP. Its pathway is cell wall biogenesis; peptidoglycan biosynthesis. In terms of biological role, catalyzes the initial step of the lipid cycle reactions in the biosynthesis of the cell wall peptidoglycan: transfers peptidoglycan precursor phospho-MurNAc-pentapeptide from UDP-MurNAc-pentapeptide onto the lipid carrier undecaprenyl phosphate, yielding undecaprenyl-pyrophosphoryl-MurNAc-pentapeptide, known as lipid I. The sequence is that of Phospho-N-acetylmuramoyl-pentapeptide-transferase from Myxococcus xanthus (strain DK1622).